Reading from the N-terminus, the 230-residue chain is Orotidine 5'-phosphate decarboxylase (230 aa).

Residues Asp11, Lys34, 61-70 (DLKLHDIPNT), Thr117, Arg179, Gln188, Gly208, and Arg209 contribute to the substrate site. Lys63 (proton donor) is an active-site residue.

It belongs to the OMP decarboxylase family. Type 1 subfamily. Homodimer.

It catalyses the reaction orotidine 5'-phosphate + H(+) = UMP + CO2. The protein operates within pyrimidine metabolism; UMP biosynthesis via de novo pathway; UMP from orotate: step 2/2. Catalyzes the decarboxylation of orotidine 5'-monophosphate (OMP) to uridine 5'-monophosphate (UMP). The sequence is that of Orotidine 5'-phosphate decarboxylase from Streptococcus pyogenes serotype M18 (strain MGAS8232).